A 412-amino-acid chain; its full sequence is MPQQNYLDELTPAFTSLLAIKEASRCLLCHDAPCSQACPAQTDPGKFIRSIYFRNFKGAAETIRENNALGAVCARVCPTEKLCQSGCTRAGVDAPIDIGRLQRFVTDFEQQTGMEIYQPGTKTLGKVAIIGAGPAGLQASVTLTNQGYDVTIYEKEAHPGGWLRNGIPQFRLPQSVLDAEIARIEKMGVTIKCNNEVGNTLTLEQLKAENRAVLVTVGLSSGSGLPLFEHSDVEIAVDFLQRARQAQGDISIPQSALIIGGGDVAMDVASTLKVLGCQAVTCVAREELDEFPASEKEFTSARELGVSIIDGFTPVAVEGNKVTFKHVRLSGELTMAADKIILAVGQHARLDAFAELEPQRNTIKTQNYQTRDPQVFAAGDIVEGDKTVVYAVKTGKEAAEAIHHYLEGACSC.

Glu286 is an NAD(+) binding site.

This sequence belongs to the NADH dehydrogenase family. In terms of assembly, heterotetramer of 2 PreA and 2 PreT subunits.

The catalysed reaction is 5,6-dihydrouracil + NAD(+) = uracil + NADH + H(+). It catalyses the reaction 5,6-dihydrothymine + NAD(+) = thymine + NADH + H(+). Its function is as follows. Involved in pyrimidine base degradation. Catalyzes physiologically the reduction of uracil to 5,6-dihydrouracil (DHU) by using NADH as a specific cosubstrate. It also catalyzes the reverse reaction and the reduction of thymine to 5,6-dihydrothymine (DHT). In Escherichia coli (strain K12), this protein is NAD-dependent dihydropyrimidine dehydrogenase subunit PreT (preT).